A 157-amino-acid polypeptide reads, in one-letter code: Urease accessory protein UreE (157 aa).

This sequence belongs to the UreE family.

It is found in the cytoplasm. Functionally, involved in urease metallocenter assembly. Binds nickel. Probably functions as a nickel donor during metallocenter assembly. The sequence is that of Urease accessory protein UreE from Corynebacterium glutamicum (strain R).